Consider the following 104-residue polypeptide: Small ribosomal subunit protein bS16 (104 aa).

Belongs to the bacterial ribosomal protein bS16 family.

The polypeptide is Small ribosomal subunit protein bS16 (Wolbachia pipientis subsp. Culex pipiens (strain wPip)).